The chain runs to 419 residues: Gamma-glutamyl phosphate reductase (419 aa).

The protein belongs to the gamma-glutamyl phosphate reductase family.

The protein localises to the cytoplasm. The enzyme catalyses L-glutamate 5-semialdehyde + phosphate + NADP(+) = L-glutamyl 5-phosphate + NADPH + H(+). It participates in amino-acid biosynthesis; L-proline biosynthesis; L-glutamate 5-semialdehyde from L-glutamate: step 2/2. Catalyzes the NADPH-dependent reduction of L-glutamate 5-phosphate into L-glutamate 5-semialdehyde and phosphate. The product spontaneously undergoes cyclization to form 1-pyrroline-5-carboxylate. The polypeptide is Gamma-glutamyl phosphate reductase (Maridesulfovibrio salexigens (strain ATCC 14822 / DSM 2638 / NCIMB 8403 / VKM B-1763) (Desulfovibrio salexigens)).